A 340-amino-acid polypeptide reads, in one-letter code: CaiB/baiF CoA-transferase family protein ZK892.4 (340 aa).

The active-site Nucleophile is the D154.

It belongs to the CoA-transferase III family.

This Caenorhabditis elegans protein is CaiB/baiF CoA-transferase family protein ZK892.4.